The sequence spans 171 residues: Envelope protein UL128 (171 aa).

It belongs to the HHV-5 UL128 protein family. As to quaternary structure, forms the envelope pentamer complex (PC) composed of gH, gL, UL128, UL130, and UL131A. The pentamer interacts with host NRP2.

The protein resides in the virion membrane. Its function is as follows. Plays a role in viral entry into host cells. Forms a pentameric complex at the surface of the viral envelope together with gH, gL, UL130 and UL131. This complex is required for entry in epithelial, endothelial and myeloid host cells. Mechanistically, engages host receptor(s) including neurophilin 2/NRP2 to mediate infection. Additionally, monomeric UL128 may interfere with certain inflammatory cytokines to increase infection and dissemination by blocking monocytes migration. The sequence is that of Envelope protein UL128 (UL128) from Human cytomegalovirus (strain Merlin) (HHV-5).